Here is a 25-residue protein sequence, read N- to C-terminus: Caerin-1.18 (25 aa).

The residue at position 25 (Leu25) is a Leucine amide.

In terms of tissue distribution, expressed by the skin dorsal glands.

Its subcellular location is the secreted. Functionally, shows significant activity against Gram-positive organisms, but is less effective against Gram-negative organisms. In Ranoidea gracilenta (Dainty green tree frog), this protein is Caerin-1.18.